The primary structure comprises 284 residues: Phosphatidylglycerol--prolipoprotein diacylglyceryl transferase (284 aa).

7 consecutive transmembrane segments (helical) span residues 14 to 34 (IAFS…ACAI), 62 to 82 (YFLW…ILIY), 106 to 126 (FVGI…IASY), 136 to 156 (LLIY…FGRI), 190 to 210 (PSQL…VLWA), 218 to 238 (GLLI…AEFY), and 252 to 272 (LSMG…ILLY). Arginine 155 serves as a coordination point for a 1,2-diacyl-sn-glycero-3-phospho-(1'-sn-glycerol).

This sequence belongs to the Lgt family.

The protein resides in the cell inner membrane. It carries out the reaction L-cysteinyl-[prolipoprotein] + a 1,2-diacyl-sn-glycero-3-phospho-(1'-sn-glycerol) = an S-1,2-diacyl-sn-glyceryl-L-cysteinyl-[prolipoprotein] + sn-glycerol 1-phosphate + H(+). It participates in protein modification; lipoprotein biosynthesis (diacylglyceryl transfer). Catalyzes the transfer of the diacylglyceryl group from phosphatidylglycerol to the sulfhydryl group of the N-terminal cysteine of a prolipoprotein, the first step in the formation of mature lipoproteins. The chain is Phosphatidylglycerol--prolipoprotein diacylglyceryl transferase from Helicobacter pylori (strain Shi470).